The sequence spans 42 residues: Proline-rich antimicrobial peptide 2 (42 aa).

Hemolymph.

The protein localises to the secreted. Antimicrobial protein. Has antibacterial activity against the Gram-positive bacterium M.luteus (MIC=8.6 uM). Lacks antibacterial activity against the Gram-positive bacteria B.circulans, L.monocytogenes, S.aureus, and S.lutea, and the Gram-negative bacteria E.coli D31, E.coli ATCC 25922, and S.typhimurium. Lacks antifungal activity against S.cerevisiae, P.pastoris, Z.marxianus, C.albicans, C.fructus, C.wickerhamii, A.niger, F.oxysporum, and T.harizianum. In Galleria mellonella (Greater wax moth), this protein is Proline-rich antimicrobial peptide 2.